We begin with the raw amino-acid sequence, 192 residues long: Probable molybdenum cofactor guanylyltransferase (192 aa).

GTP-binding positions include 8 to 10, lysine 20, aspartate 69, and aspartate 94; that span reads LAG. A Mg(2+)-binding site is contributed by aspartate 94.

This sequence belongs to the MobA family. The cofactor is Mg(2+).

The protein resides in the cytoplasm. It catalyses the reaction Mo-molybdopterin + GTP + H(+) = Mo-molybdopterin guanine dinucleotide + diphosphate. Transfers a GMP moiety from GTP to Mo-molybdopterin (Mo-MPT) cofactor (Moco or molybdenum cofactor) to form Mo-molybdopterin guanine dinucleotide (Mo-MGD) cofactor. The sequence is that of Probable molybdenum cofactor guanylyltransferase from Pyrococcus horikoshii (strain ATCC 700860 / DSM 12428 / JCM 9974 / NBRC 100139 / OT-3).